We begin with the raw amino-acid sequence, 179 residues long: Large ribosomal subunit protein uL5 (179 aa).

Belongs to the universal ribosomal protein uL5 family. Part of the 50S ribosomal subunit; part of the 5S rRNA/L5/L18/L25 subcomplex. Contacts the 5S rRNA and the P site tRNA. Forms a bridge to the 30S subunit in the 70S ribosome.

Functionally, this is one of the proteins that bind and probably mediate the attachment of the 5S RNA into the large ribosomal subunit, where it forms part of the central protuberance. In the 70S ribosome it contacts protein S13 of the 30S subunit (bridge B1b), connecting the 2 subunits; this bridge is implicated in subunit movement. Contacts the P site tRNA; the 5S rRNA and some of its associated proteins might help stabilize positioning of ribosome-bound tRNAs. In Herpetosiphon aurantiacus (strain ATCC 23779 / DSM 785 / 114-95), this protein is Large ribosomal subunit protein uL5.